The sequence spans 313 residues: Putative HTH-type transcriptional regulatory protein Msm_0453 (313 aa).

The HTH cro/C1-type domain occupies 131 to 189 (IKQYREEYSLSLKDLADLAHVSRATMYKYENEIVRANTETAMILEEILNTKVTLDIDLL). A DNA-binding region (H-T-H motif) is located at residues 142–161 (LKDLADLAHVSRATMYKYEN).

The protein is Putative HTH-type transcriptional regulatory protein Msm_0453 of Methanobrevibacter smithii (strain ATCC 35061 / DSM 861 / OCM 144 / PS).